Here is a 279-residue protein sequence, read N- to C-terminus: Small ribosomal subunit protein uS2 (279 aa).

The tract at residues 255–279 is disordered; sequence LLAGATTAAPEAAAGEAAAAPEQSS.

The protein belongs to the universal ribosomal protein uS2 family.

The chain is Small ribosomal subunit protein uS2 from Mycolicibacterium gilvum (strain PYR-GCK) (Mycobacterium gilvum (strain PYR-GCK)).